The sequence spans 506 residues: 2-isopropylmalate synthase (506 aa).

The Pyruvate carboxyltransferase domain occupies 4-266 (ILFMDTTLRD…EPSITLKEIK (263 aa)). Positions 13, 201, 203, and 237 each coordinate Mn(2+). Residues 390–506 (NITQLQVHFV…KLKSFIQLVK (117 aa)) form a regulatory domain region.

This sequence belongs to the alpha-IPM synthase/homocitrate synthase family. LeuA type 1 subfamily. As to quaternary structure, homodimer. Requires Mn(2+) as cofactor.

The protein localises to the cytoplasm. It carries out the reaction 3-methyl-2-oxobutanoate + acetyl-CoA + H2O = (2S)-2-isopropylmalate + CoA + H(+). It functions in the pathway amino-acid biosynthesis; L-leucine biosynthesis; L-leucine from 3-methyl-2-oxobutanoate: step 1/4. Its function is as follows. Catalyzes the condensation of the acetyl group of acetyl-CoA with 3-methyl-2-oxobutanoate (2-ketoisovalerate) to form 3-carboxy-3-hydroxy-4-methylpentanoate (2-isopropylmalate). The sequence is that of 2-isopropylmalate synthase from Bacillus thuringiensis subsp. konkukian (strain 97-27).